A 138-amino-acid polypeptide reads, in one-letter code: Large ribosomal subunit protein bL17 (138 aa).

Belongs to the bacterial ribosomal protein bL17 family. Part of the 50S ribosomal subunit. Contacts protein L32.

This is Large ribosomal subunit protein bL17 from Methylorubrum populi (strain ATCC BAA-705 / NCIMB 13946 / BJ001) (Methylobacterium populi).